The following is a 503-amino-acid chain: Probable cytosol aminopeptidase (503 aa).

Mn(2+)-binding residues include K270 and D275. The active site involves K282. Mn(2+) contacts are provided by D293, D352, and E354. The active site involves R356.

This sequence belongs to the peptidase M17 family. The cofactor is Mn(2+).

It localises to the cytoplasm. It carries out the reaction Release of an N-terminal amino acid, Xaa-|-Yaa-, in which Xaa is preferably Leu, but may be other amino acids including Pro although not Arg or Lys, and Yaa may be Pro. Amino acid amides and methyl esters are also readily hydrolyzed, but rates on arylamides are exceedingly low.. The catalysed reaction is Release of an N-terminal amino acid, preferentially leucine, but not glutamic or aspartic acids.. In terms of biological role, presumably involved in the processing and regular turnover of intracellular proteins. Catalyzes the removal of unsubstituted N-terminal amino acids from various peptides. In Pectobacterium atrosepticum (strain SCRI 1043 / ATCC BAA-672) (Erwinia carotovora subsp. atroseptica), this protein is Probable cytosol aminopeptidase.